Consider the following 184-residue polypeptide: NADH-quinone oxidoreductase subunit B (184 aa).

Cys37, Cys38, Cys103, and Cys132 together coordinate [4Fe-4S] cluster.

It belongs to the complex I 20 kDa subunit family. In terms of assembly, NDH-1 is composed of 14 different subunits. Subunits NuoB, C, D, E, F, and G constitute the peripheral sector of the complex. It depends on [4Fe-4S] cluster as a cofactor.

The protein resides in the cell membrane. The catalysed reaction is a quinone + NADH + 5 H(+)(in) = a quinol + NAD(+) + 4 H(+)(out). NDH-1 shuttles electrons from NADH, via FMN and iron-sulfur (Fe-S) centers, to quinones in the respiratory chain. The immediate electron acceptor for the enzyme in this species is believed to be a menaquinone. Couples the redox reaction to proton translocation (for every two electrons transferred, four hydrogen ions are translocated across the cytoplasmic membrane), and thus conserves the redox energy in a proton gradient. This chain is NADH-quinone oxidoreductase subunit B, found in Mycolicibacterium vanbaalenii (strain DSM 7251 / JCM 13017 / BCRC 16820 / KCTC 9966 / NRRL B-24157 / PYR-1) (Mycobacterium vanbaalenii).